The primary structure comprises 304 residues: UDP-3-O-acyl-N-acetylglucosamine deacetylase (304 aa).

Zn(2+) is bound by residues histidine 78, histidine 237, and aspartate 241. The Proton donor role is filled by histidine 264.

The protein belongs to the LpxC family. Zn(2+) is required as a cofactor.

It carries out the reaction a UDP-3-O-[(3R)-3-hydroxyacyl]-N-acetyl-alpha-D-glucosamine + H2O = a UDP-3-O-[(3R)-3-hydroxyacyl]-alpha-D-glucosamine + acetate. The protein operates within glycolipid biosynthesis; lipid IV(A) biosynthesis; lipid IV(A) from (3R)-3-hydroxytetradecanoyl-[acyl-carrier-protein] and UDP-N-acetyl-alpha-D-glucosamine: step 2/6. Functionally, catalyzes the hydrolysis of UDP-3-O-myristoyl-N-acetylglucosamine to form UDP-3-O-myristoylglucosamine and acetate, the committed step in lipid A biosynthesis. This Polynucleobacter necessarius subsp. necessarius (strain STIR1) protein is UDP-3-O-acyl-N-acetylglucosamine deacetylase.